The sequence spans 66 residues: Myrmicitoxin(1)-Pr5a (66 aa).

The N-terminal stretch at 1–25 (MRSLYLSFSLTIIFVLVIMHAEAKA) is a signal peptide. The propeptide occupies 26–37 (ISEPNAIAEADP). Valine 65 is subject to Valine amide.

The protein belongs to the formicidae venom clade 3 family. In terms of tissue distribution, expressed by the venom gland.

It localises to the secreted. Toxin that causes a rapid and irreversible paralysis when intrathoracically injected into insects (blowflies). Does not cause spontaneous nocifensive behaviors by intraplantar injection in mice. Exhibits hemolytic and cytotoxic activities on HEK293 cells. The chain is Myrmicitoxin(1)-Pr5a from Pogonomyrmex rugosus (Desert harvester ant).